The chain runs to 848 residues: Aryl hydrocarbon receptor (848 aa).

Residue Met1 is modified to N-acetylmethionine. Positions 1 to 10 (MNSSSANITY) are excised as a propeptide. A compositionally biased stretch (polar residues) spans 1–10 (MNSSSANITY). Residues 1-39 (MNSSSANITYASRKRRKPVQKTVKPIPAEGIKSNPSKRH) form a disordered region. Short sequence motifs (nuclear localization signal) lie at residues 13 to 16 (RKRR) and 37 to 42 (KRHRDR). Positions 27-80 (PAEGIKSNPSKRHRDRLNTELDRLASLLPFPQDVINKLDKLSVLRLSVSYLRAK) constitute a bHLH domain. The segment at 38 to 66 (RHRDRLNTELDRLASLLPFPQDVINKLDK) is DNA-binding. Required for maintaining the overall integrity of the AHR:ARNT heterodimer and its transcriptional activity stretches follow at residues 50–82 (LASL…AKSF), 118–126 (LLQALNGFV), and 266–268 (FAI). Positions 64–72 (LDKLSVLRL) match the Nuclear export signal motif. A PAS 1 domain is found at 111 to 181 (NLQEGEFLLQ…RQLHWALNPS (71 aa)). One can recognise a PAS 2 domain in the interval 275–342 (PSILEIRTKN…CAESHIRMIK (68 aa)). The PAC domain maps to 348–386 (MIVFRLLTKNNRWTWVQSNARLLYKNGRPDYIIVTQRPL). Residues 824–848 (TTHLQPLHHPSEARPFPDLTSSGFL) are disordered.

In terms of assembly, homodimer. Heterodimer; efficient DNA binding requires dimerization with another bHLH protein. Interacts with ARNT; the heterodimer ARNT:AHR binds to core DNA sequence 5'-TGCGTG-3' within the dioxin response element (DRE) of target gene promoters and activates their transcription. Binds MYBBP1A. Interacts with coactivators including SRC-1, RIP140 and NOCA7, and with the corepressor SMRT. Interacts with NEDD8 and IVNS1ABP. Interacts with BMAL1. Interacts with HSP90AB1. Interacts with TIPARP; leading to mono-ADP-ribosylation of AHR and subsequent inhibition of AHR. Post-translationally, mono-ADP-ribosylated, leading to inhibit transcription activator activity of AHR. In terms of tissue distribution, expressed in all tissues tested including blood, brain, heart, kidney, liver, lung, pancreas and skeletal muscle. Expressed in retinal photoreceptors.

It localises to the cytoplasm. It is found in the nucleus. Its function is as follows. Ligand-activated transcription factor that enables cells to adapt to changing conditions by sensing compounds from the environment, diet, microbiome and cellular metabolism, and which plays important roles in development, immunity and cancer. Upon ligand binding, translocates into the nucleus, where it heterodimerizes with ARNT and induces transcription by binding to xenobiotic response elements (XRE). Regulates a variety of biological processes, including angiogenesis, hematopoiesis, drug and lipid metabolism, cell motility and immune modulation. Xenobiotics can act as ligands: upon xenobiotic-binding, activates the expression of multiple phase I and II xenobiotic chemical metabolizing enzyme genes (such as the CYP1A1 gene). Mediates biochemical and toxic effects of halogenated aromatic hydrocarbons. Next to xenobiotics, natural ligands derived from plants, microbiota, and endogenous metabolism are potent AHR agonists. Tryptophan (Trp) derivatives constitute an important class of endogenous AHR ligands. Acts as a negative regulator of anti-tumor immunity: indoles and kynurenic acid generated by Trp catabolism act as ligand and activate AHR, thereby promoting AHR-driven cancer cell motility and suppressing adaptive immunity. Regulates the circadian clock by inhibiting the basal and circadian expression of the core circadian component PER1. Inhibits PER1 by repressing the CLOCK-BMAL1 heterodimer mediated transcriptional activation of PER1. The heterodimer ARNT:AHR binds to core DNA sequence 5'-TGCGTG-3' within the dioxin response element (DRE) of target gene promoters and activates their transcription. This chain is Aryl hydrocarbon receptor, found in Homo sapiens (Human).